The chain runs to 151 residues: Transcriptional regulator MraZ (151 aa).

SpoVT-AbrB domains lie at Ala-5–Glu-52 and Ala-81–Ala-124.

It belongs to the MraZ family. Forms oligomers.

The protein localises to the cytoplasm. It is found in the nucleoid. In Pseudomonas putida (strain W619), this protein is Transcriptional regulator MraZ.